A 215-amino-acid polypeptide reads, in one-letter code: MNIILFGPPGAGKGTQAKKMVDNYGIPQISTGDILRANVREGTELGLAAKEYMDKGELVPDEVLIGIIKNRLKEQDCEKGFILDGYPRTIPQADALAVILDEINKPIDVVLNLEVPDEELIERISGRLMCNCGASYHRTFNPPKKDDVCDICGGKVFQRADDKEEAVKNRLNVYKKQTEPLIDYYTKQGLLVTLDGTKDIDEVFEEIKAVLKKFA.

10-15 serves as a coordination point for ATP; sequence GAGKGT. The tract at residues 30–59 is NMP; it reads STGDILRANVREGTELGLAAKEYMDKGELV. AMP is bound by residues T31, R36, 57-59, 85-88, and Q92; these read ELV and GYPR. The segment at 126 to 162 is LID; sequence GRLMCNCGASYHRTFNPPKKDDVCDICGGKVFQRADD. Position 127 (R127) interacts with ATP. C130 and C132 together coordinate Zn(2+). 135–136 lines the ATP pocket; sequence SY. C149 and C152 together coordinate Zn(2+). 2 residues coordinate AMP: R159 and R170. An ATP-binding site is contributed by K198.

Belongs to the adenylate kinase family. Monomer.

It is found in the cytoplasm. The catalysed reaction is AMP + ATP = 2 ADP. The protein operates within purine metabolism; AMP biosynthesis via salvage pathway; AMP from ADP: step 1/1. Catalyzes the reversible transfer of the terminal phosphate group between ATP and AMP. Plays an important role in cellular energy homeostasis and in adenine nucleotide metabolism. This is Adenylate kinase from Methanosarcina barkeri (strain Fusaro / DSM 804).